The following is a 400-amino-acid chain: Large envelope protein (400 aa).

Met-1 carries the post-translational modification N-acetylmethionine. Disordered stretches follow at residues 1–54 (MGGW…HWPE) and 85–116 (LTTVPAAPPPASTNRQSGRQPTPISPPLRDSH). Gly-2 is lipidated: N-myristoyl glycine; by host. Positions 2-119 (GGWSSKPRQG…PPLRDSHPQA (118 aa)) are pre-S1. The interval 2 to 174 (GGWSSKPRQG…FSRTGDPAPN (173 aa)) is pre-S. Topologically, residues 2–181 (GGWSSKPRQG…APNMENTTSG (180 aa)) are virion surface; in external conformation. The Intravirion; in internal conformation portion of the chain corresponds to 2-253 (GGWSSKPRQG…PGYRWMCLRR (252 aa)). Trp-4 carries an N-linked (GlcNAc...) asparagine glycan. The segment covering 96-106 (STNRQSGRQPT) has biased composition (polar residues). Residues 120 to 174 (MQWNSTTFHQALLDPRVRGLYFPAGGSSSGTVNPVPTTASPISSIFSRTGDPAPN) form a pre-S2 region. Residues 182–202 (FLGPLLVLQAGFFLLTRILTI) form a helical membrane-spanning segment. Topologically, residues 203 to 253 (PQSLDSWWTSLNFLGGAPTCPGQNSQSPTSNHSPTSCPPICPGYRWMCLRR) are intravirion; in external conformation. Residues 254–274 (FIIFLFILLLCLIFLLVLLDY) traverse the membrane as a helical segment. Over 275–348 (QGMLPVCPLL…WASVRFSWLS (74 aa)) the chain is Virion surface. The N-linked (GlcNAc...) asparagine; by host glycan is linked to Asn-320. Residues 349–369 (LLVPFVQWFAGLSPTVWLSVI) traverse the membrane as a helical segment. Residues 370–375 (WMMWYW) are Intravirion-facing. A helical transmembrane segment spans residues 376–398 (GPSLYNILSPFLPLLPIFFCLWV). The Virion surface segment spans residues 399–400 (YI).

This sequence belongs to the orthohepadnavirus major surface antigen family. As to quaternary structure, in its internal form (Li-HBsAg), interacts with the capsid protein and with the isoform S. Interacts with host chaperone CANX. Associates with host chaperone CANX through its pre-S2 N glycan; this association may be essential for isoform M proper secretion. In terms of assembly, interacts with isoform L. Interacts with the antigens of satellite virus HDV (HDVAgs); this interaction is required for encapsidation of HDV genomic RNA. In terms of processing, isoform M is N-terminally acetylated by host at a ratio of 90%, and N-glycosylated by host at the pre-S2 region. Post-translationally, myristoylated.

It localises to the virion membrane. Functionally, the large envelope protein exists in two topological conformations, one which is termed 'external' or Le-HBsAg and the other 'internal' or Li-HBsAg. In its external conformation the protein attaches the virus to cell receptors and thereby initiating infection. This interaction determines the species specificity and liver tropism. This attachment induces virion internalization predominantly through caveolin-mediated endocytosis. The large envelope protein also assures fusion between virion membrane and endosomal membrane. In its internal conformation the protein plays a role in virion morphogenesis and mediates the contact with the nucleocapsid like a matrix protein. The middle envelope protein plays an important role in the budding of the virion. It is involved in the induction of budding in a nucleocapsid independent way. In this process the majority of envelope proteins bud to form subviral lipoprotein particles of 22 nm of diameter that do not contain a nucleocapsid. The chain is Large envelope protein from Homo sapiens (Human).